The chain runs to 103 residues: Putative double-stranded DNA mimic protein HD_0986 (103 aa).

It belongs to the putative dsDNA mimic protein family.

Its function is as follows. May act as a double-stranded DNA (dsDNA) mimic. Probably regulates the activity of a dsDNA-binding protein. The protein is Putative double-stranded DNA mimic protein HD_0986 of Haemophilus ducreyi (strain 35000HP / ATCC 700724).